Reading from the N-terminus, the 117-residue chain is Hydrogenase maturation factor HypA (117 aa).

His-2 contributes to the Ni(2+) binding site. Zn(2+)-binding residues include Cys-73, Cys-76, Cys-90, and Cys-93.

Belongs to the HypA/HybF family.

Functionally, involved in the maturation of [NiFe] hydrogenases. Required for nickel insertion into the metal center of the hydrogenase. The protein is Hydrogenase maturation factor HypA of Pectobacterium atrosepticum (strain SCRI 1043 / ATCC BAA-672) (Erwinia carotovora subsp. atroseptica).